Consider the following 97-residue polypeptide: Coiled-coil domain-containing protein 167 (97 aa).

Positions 2–78 form a coiled coil; the sequence is TKKKRENLGV…LLRHENRKNT (77 aa). The helical transmembrane segment at 78-95 threads the bilayer; the sequence is TLLSVAIFTVFALLYAYW.

It localises to the membrane. The chain is Coiled-coil domain-containing protein 167 (Ccdc167) from Mus musculus (Mouse).